The chain runs to 495 residues: Lysine--tRNA ligase (495 aa).

The Mg(2+) site is built by E406 and E413.

Belongs to the class-II aminoacyl-tRNA synthetase family. In terms of assembly, homodimer. The cofactor is Mg(2+).

The protein resides in the cytoplasm. It catalyses the reaction tRNA(Lys) + L-lysine + ATP = L-lysyl-tRNA(Lys) + AMP + diphosphate. This Staphylococcus epidermidis (strain ATCC 35984 / DSM 28319 / BCRC 17069 / CCUG 31568 / BM 3577 / RP62A) protein is Lysine--tRNA ligase.